The following is a 221-amino-acid chain: UPF0502 protein PA14_19450 (221 aa).

It belongs to the UPF0502 family.

In Pseudomonas aeruginosa (strain UCBPP-PA14), this protein is UPF0502 protein PA14_19450.